The chain runs to 364 residues: tRNA/tmRNA (uracil-C(5))-methyltransferase (364 aa).

The S-adenosyl-L-methionine site is built by glutamine 188, tyrosine 216, asparagine 221, glutamate 237, and aspartate 297. Cysteine 322 acts as the Nucleophile in catalysis. Glutamate 356 functions as the Proton acceptor in the catalytic mechanism.

The protein belongs to the class I-like SAM-binding methyltransferase superfamily. RNA M5U methyltransferase family. TrmA subfamily.

The enzyme catalyses uridine(54) in tRNA + S-adenosyl-L-methionine = 5-methyluridine(54) in tRNA + S-adenosyl-L-homocysteine + H(+). It catalyses the reaction uridine(341) in tmRNA + S-adenosyl-L-methionine = 5-methyluridine(341) in tmRNA + S-adenosyl-L-homocysteine + H(+). Dual-specificity methyltransferase that catalyzes the formation of 5-methyluridine at position 54 (m5U54) in all tRNAs, and that of position 341 (m5U341) in tmRNA (transfer-mRNA). This chain is tRNA/tmRNA (uracil-C(5))-methyltransferase, found in Teredinibacter turnerae (strain ATCC 39867 / T7901).